The sequence spans 183 residues: UPF0397 protein VSAL_I1988 (183 aa).

5 consecutive transmembrane segments (helical) span residues 8-28 (VVVI…MFGI), 41-61 (AVLA…VGFI), 74-94 (VWLT…LFPI), 110-130 (FFIF…TSAF), and 147-167 (LCII…FILT).

It belongs to the UPF0397 family.

The protein resides in the cell membrane. The protein is UPF0397 protein VSAL_I1988 of Aliivibrio salmonicida (strain LFI1238) (Vibrio salmonicida (strain LFI1238)).